The following is a 275-amino-acid chain: Anthracycline biosynthesis protein DauV (275 aa).

VOC domains are found at residues 8–136 (APAW…VWRK) and 150–263 (SVGW…VVEL).

The protein operates within antibiotic biosynthesis; daunorubicin biosynthesis. Its pathway is antibiotic biosynthesis; carminomycin biosynthesis. Involved in the biosynthesis of the anthracyclines carminomycin and daunorubicin (daunomycin) which are aromatic polyketide antibiotics that exhibit high cytotoxicity and are widely applied in the chemotherapy of a variety of cancers. Acts jointly with DoxA in the conversion of 13-deoxycarminomycin and 13-deoxydaunorubicin to yield carminomycin and daunorubicin, respectively. The chain is Anthracycline biosynthesis protein DauV (dauV) from Streptomyces sp. (strain C5).